The following is a 102-amino-acid chain: Small ribosomal subunit protein uS10 (102 aa).

Belongs to the universal ribosomal protein uS10 family. As to quaternary structure, part of the 30S ribosomal subunit.

Involved in the binding of tRNA to the ribosomes. This Akkermansia muciniphila (strain ATCC BAA-835 / DSM 22959 / JCM 33894 / BCRC 81048 / CCUG 64013 / CIP 107961 / Muc) protein is Small ribosomal subunit protein uS10.